We begin with the raw amino-acid sequence, 363 residues long: Protein-glutamate methylesterase/protein-glutamine glutaminase 2 (363 aa).

The Response regulatory domain maps to 6-123 (RVLIVDDSAS…AQFLLESKIH (118 aa)). Asp57 carries the 4-aspartylphosphate modification. The CheB-type methylesterase domain occupies 172–363 (ARTTESVICI…AMEILRAGNR (192 aa)). Catalysis depends on residues Ser184, His210, and Asp306.

It belongs to the CheB family. In terms of processing, phosphorylated by CheA. Phosphorylation of the N-terminal regulatory domain activates the methylesterase activity.

Its subcellular location is the cytoplasm. The enzyme catalyses [protein]-L-glutamate 5-O-methyl ester + H2O = L-glutamyl-[protein] + methanol + H(+). It catalyses the reaction L-glutaminyl-[protein] + H2O = L-glutamyl-[protein] + NH4(+). Involved in chemotaxis. Part of a chemotaxis signal transduction system that modulates chemotaxis in response to various stimuli. Catalyzes the demethylation of specific methylglutamate residues introduced into the chemoreceptors (methyl-accepting chemotaxis proteins or MCP) by CheR. Also mediates the irreversible deamidation of specific glutamine residues to glutamic acid. This Rhodospirillum rubrum (strain ATCC 11170 / ATH 1.1.1 / DSM 467 / LMG 4362 / NCIMB 8255 / S1) protein is Protein-glutamate methylesterase/protein-glutamine glutaminase 2.